We begin with the raw amino-acid sequence, 411 residues long: Basic leucine zipper 10 (411 aa).

Disordered regions lie at residues 1-36 (MNSIFSIDDFSDPFWETPPIPLNPDSSKPVTADEVS), 76-99 (SLPSVSGQNDFEDDSRFRDRDSGN), 140-251 (SVKP…NDLK), and 362-411 (NNFA…KCVD). Over residues 24–36 (PDSSKPVTADEVS) the composition is skewed to polar residues. The segment covering 89 to 98 (DSRFRDRDSG) has biased composition (basic and acidic residues). Composition is skewed to polar residues over residues 146–173 (STSSPETQLQPVQSSPLTQGELGVTSSL) and 183–193 (SMKQVTSGSSR). The residue at position 196 (serine 196) is a Phosphoserine. The segment covering 196–206 (SDDEDLDEENE) has biased composition (acidic residues). The bZIP domain occupies 215–278 (DVKKSRRMLS…DEAAVGNRIL (64 aa)). The interval 217 to 236 (KKSRRMLSNRESARRSRRRK) is basic motif. A Nuclear localization signal motif is present at residues 219-226 (SRRMLSNR). The segment at 243–257 (LETQVNDLKGEHSSL) is leucine-zipper. Over residues 368–390 (PSQTSSPLQRIRNGQNHHVTPSA) the composition is skewed to polar residues.

This sequence belongs to the bZIP family. Forms a heterodimer with BZIP1, BZIP2, BZIP9, BZIP11, BZIP44, BZIP53 and BZIP63. Interacts with ABI3 and forms a complex made of ABI3, BZIP53 and BZIP10. Binding with LSD1 leads to cytoplasmic retention. As to expression, expressed in roots, shoots, stems, young leaves, trichomes, hydathodes, siliques, seeds, and flowers, mostly in vascular tissues.

It is found in the nucleus. It localises to the cytoplasm. Transcription factor that binds to the C-box-like motif (5'-TGCTGACGTCA-3') and G-box-like motif (5'-CCACGTGGCC-3'), ABRE elements, of gene promoters. Binds to the 5'-ACGT-3' motif of seed storage protein (SSP) encoding gene promoters (e.g. At2S and CRU3) and promotes their expression in seeds when in complex with ABI3 and BZIP53. Involved in the defense responses to the biotrophic pathogen Hyaloperonospora parasitica and oxidative stress responses; mediates positively cell death. Promotes BZIP53-mediated response to hypoosmolarity stress that leads to POX1/PRODH1 accumulation. The protein is Basic leucine zipper 10 (BZIP10) of Arabidopsis thaliana (Mouse-ear cress).